The chain runs to 427 residues: Flavohemoprotein (427 aa).

In terms of domain architecture, Globin spans 30 to 168; that stretch reads ELNESQKQYI…LAKILIDSEK (139 aa). H114 provides a ligand contact to heme b. Catalysis depends on charge relay system residues Y124 and E167. The interval 176–427 is reductase; it reads WNGFVEFKVT…QSEFFGPYIP (252 aa). The region spanning 177–285 is the FAD-binding FR-type domain; sequence NGFVEFKVTE…SPPAGNFVYK (109 aa). FAD-binding positions include Y216 and 232–235; that span reads REYS. Residue 301 to 306 participates in NADP(+) binding; the sequence is GIGITP. 421 to 424 serves as a coordination point for FAD; sequence FFGP.

This sequence belongs to the globin family. Two-domain flavohemoproteins subfamily. It in the C-terminal section; belongs to the flavoprotein pyridine nucleotide cytochrome reductase family. FAD serves as cofactor. It depends on heme b as a cofactor.

It localises to the cytoplasm. The protein localises to the nucleus. It carries out the reaction 2 nitric oxide + NADPH + 2 O2 = 2 nitrate + NADP(+) + H(+). It catalyses the reaction 2 nitric oxide + NADH + 2 O2 = 2 nitrate + NAD(+) + H(+). Is involved in NO detoxification in an aerobic process, termed nitric oxide dioxygenase (NOD) reaction that utilizes O(2) and NAD(P)H to convert NO to nitrate, which protects the fungus from various noxious nitrogen compounds. Therefore, plays a central role in the inducible response to nitrosative stress. Functionally, in the presence of oxygen and NADH, it has NADH oxidase activity, which leads to the generation of superoxide and H(2)O(2). Under anaerobic conditions, it also exhibits nitric oxide reductase and FAD reductase activities. However, all these reactions are much lower than NOD activity. This Schizosaccharomyces pombe (strain 972 / ATCC 24843) (Fission yeast) protein is Flavohemoprotein.